Here is a 304-residue protein sequence, read N- to C-terminus: Oxygen-dependent coproporphyrinogen-III oxidase (304 aa).

Substrate is bound at residue S93. Positions 97 and 107 each coordinate a divalent metal cation. The active-site Proton donor is the H107. Residue 109–111 (NVR) coordinates substrate. Positions 146 and 176 each coordinate a divalent metal cation. The important for dimerization stretch occupies residues 241 to 276 (YVEFNLVYDRGTLFGLQSGGRTESILMSLPPQVRWG). Substrate is bound at residue 259-261 (GGR).

Belongs to the aerobic coproporphyrinogen-III oxidase family. Homodimer. A divalent metal cation is required as a cofactor.

Its subcellular location is the cytoplasm. The catalysed reaction is coproporphyrinogen III + O2 + 2 H(+) = protoporphyrinogen IX + 2 CO2 + 2 H2O. The protein operates within porphyrin-containing compound metabolism; protoporphyrin-IX biosynthesis; protoporphyrinogen-IX from coproporphyrinogen-III (O2 route): step 1/1. Its function is as follows. Involved in the heme biosynthesis. Catalyzes the aerobic oxidative decarboxylation of propionate groups of rings A and B of coproporphyrinogen-III to yield the vinyl groups in protoporphyrinogen-IX. This chain is Oxygen-dependent coproporphyrinogen-III oxidase, found in Pseudomonas syringae pv. tomato (strain ATCC BAA-871 / DC3000).